A 647-amino-acid polypeptide reads, in one-letter code: DNA mismatch repair protein MutL (647 aa).

Residues 377–396 (EEPQAVKQSAQLWQPPKQEW) form a disordered region. Over residues 387–396 (QLWQPPKQEW) the composition is skewed to low complexity.

This sequence belongs to the DNA mismatch repair MutL/HexB family.

In terms of biological role, this protein is involved in the repair of mismatches in DNA. It is required for dam-dependent methyl-directed DNA mismatch repair. May act as a 'molecular matchmaker', a protein that promotes the formation of a stable complex between two or more DNA-binding proteins in an ATP-dependent manner without itself being part of a final effector complex. This is DNA mismatch repair protein MutL from Bacillus cereus (strain AH187).